The chain runs to 1578 residues: BRD4-interacting chromatin-remodeling complex-associated protein (1578 aa).

Disordered regions lie at residues 80–101 (DILG…DQPC), 631–673 (PAVT…PSLA), and 725–951 (IVSA…PPPR). Over residues 86-96 (AAGGGGGGGGA) the composition is skewed to gly residues. 2 stretches are compositionally biased toward low complexity: residues 631–662 (PAVT…TQPQ) and 764–782 (IPAA…PSLP). Composition is skewed to pro residues over residues 793–816 (MPSP…PPSQ), 824–841 (PSEP…PPTL), and 865–888 (PGPP…PASH). A compositionally biased stretch (low complexity) spans 889–906 (LPPASTPSAVASSSEPSA). Residue serine 929 is modified to Phosphoserine. Threonine 931 carries the phosphothreonine modification. Residues 942–951 (PTAPPPPPPR) are compositionally biased toward pro residues. Lysine 1067 is subject to N6-acetyllysine. Positions 1206–1316 (EKPDEYVSSS…NRPPIKTYEA (111 aa)) are disordered. 2 stretches are compositionally biased toward low complexity: residues 1233–1247 (SHGQ…GTSA) and 1275–1294 (ASSS…AASS). Lysine 1327 is covalently cross-linked (Glycyl lysine isopeptide (Lys-Gly) (interchain with G-Cter in SUMO2)). 2 disordered regions span residues 1342–1435 (DPVH…PTKV) and 1457–1578 (VLKG…TLNR). Residues 1346–1370 (QPLPAPTPAKGAEPPPHPAPPPLPP) are compositionally biased toward pro residues. Residue serine 1427 is modified to Phosphoserine. A compositionally biased stretch (polar residues) spans 1502 to 1532 (ASFSSDSPQDDTLTEHLQSAIDSILNLQQAP). Residues 1538 to 1553 (GPYPHTGPTPGTPTSP) are compositionally biased toward pro residues.

Component of the multiprotein chromatin-remodeling complexes SWI/SNF: SWI/SNF-A (BAF), SWI/SNF-B (PBAF) and related complexes. The canonical complex contains a catalytic subunit (either SMARCA4/BRG1/BAF190A or SMARCA2/BRM/BAF190B) and at least SMARCE1, ACTL6A/BAF53, SMARCC1/BAF155, SMARCC2/BAF170, and SMARCB1/SNF5/BAF47. Other subunits specific to each of the complexes may also be present permitting several possible combinations developmentally and tissue specific. Component of the SWI/SNF (GBAF) subcomplex, which includes at least BICRA or BICRAL (mutually exclusive), BRD9, SS18, the core BAF subunits, SMARCA2/BRM, SMARCA4/BRG1/BAF190A, ACTL6A/BAF53, SMARCC1/BAF155, and SMARCD1/BAF60A. Interacts with BRD4; the interaction bridges BRD4 to the GBAF complex.

It is found in the nucleus. Its function is as follows. Component of SWI/SNF chromatin remodeling subcomplex GBAF that carries out key enzymatic activities, changing chromatin structure by altering DNA-histone contacts within a nucleosome in an ATP-dependent manner. May play a role in BRD4-mediated gene transcription. The polypeptide is BRD4-interacting chromatin-remodeling complex-associated protein (Mus musculus (Mouse)).